A 1204-amino-acid chain; its full sequence is E3 ubiquitin-protein ligase DZIP3 (1204 aa).

Disordered regions lie at residues 1-22 (MDSL…QTKE) and 640-681 (SIPS…EQVS). The span at 649–658 (SVKDLQEVKS) shows a compositional bias: basic and acidic residues. A compositionally biased stretch (basic residues) spans 659 to 668 (KTKKKKRTKS). Coiled-coil stretches lie at residues 746–861 (KETE…TSRA) and 906–941 (QLKA…KVKQ). The span at 1088–1098 (PKKSESEEKSA) shows a compositional bias: basic and acidic residues. The tract at residues 1088–1141 (PKKSESEEKSAQDGNNASPSHTASQPNAPQDPKSAQGSATWEGDKDMDNEEEEE) is disordered. Polar residues predominate over residues 1099–1126 (QDGNNASPSHTASQPNAPQDPKSAQGSA). Acidic residues predominate over residues 1132–1141 (KDMDNEEEEE). The RING-type; atypical zinc finger occupies 1144–1184 (CVICHENLSPENLSVLPCAHKFHSQCIRPWLMQQGTCPTCR).

Probably interacts with DAZL.

The protein localises to the cytoplasm. It carries out the reaction S-ubiquitinyl-[E2 ubiquitin-conjugating enzyme]-L-cysteine + [acceptor protein]-L-lysine = [E2 ubiquitin-conjugating enzyme]-L-cysteine + N(6)-ubiquitinyl-[acceptor protein]-L-lysine.. The protein operates within protein modification; protein ubiquitination. E3 Ubiquitin ligase proteins mediate ubiquitination and subsequent proteasomal degradation of target proteins. E3 ubiquitin ligases accept ubiquitin from an E2 ubiquitin-conjugating enzyme in the form of a thioester and then directly transfers the ubiquitin to targeted substrates. Able to specifically bind RNA. This Mus musculus (Mouse) protein is E3 ubiquitin-protein ligase DZIP3 (Dzip3).